The chain runs to 210 residues: MENTEKLKNSKEIVAYLVEKFPACFIAEGEAKPLKIGIFQDLAERLADDARVSKTMLRSALRQYTSSWRYLHGLKAGQARVDLDGNPGELLTEEHIEHAKQALKESKERVFASRRTNNKEEKAKQPRRPAPRKADAAAKSDKPKAAPKAVVADAPLVKVDAANLKVDQGVRVVLGKSPVPATIKEVTKDDVQVQLQTGMMLQVKFEHLVL.

2 stretches are compositionally biased toward basic and acidic residues: residues 103-124 (LKESKERVFASRRTNNKEEKAK) and 132-144 (RKADAAAKSDKPK). The segment at 103-148 (LKESKERVFASRRTNNKEEKAKQPRRPAPRKADAAAKSDKPKAAPK) is disordered.

Belongs to the ProQ family.

The protein resides in the cytoplasm. In terms of biological role, RNA chaperone with significant RNA binding, RNA strand exchange and RNA duplexing activities. The sequence is that of RNA chaperone ProQ from Aeromonas salmonicida (strain A449).